The following is a 449-amino-acid chain: Probable phosphoglucosamine mutase (449 aa).

Serine 96 functions as the Phosphoserine intermediate in the catalytic mechanism. Residues serine 96, aspartate 233, aspartate 235, and aspartate 237 each contribute to the Mg(2+) site. Serine 96 is subject to Phosphoserine.

This sequence belongs to the phosphohexose mutase family. It depends on Mg(2+) as a cofactor. In terms of processing, activated by phosphorylation.

The enzyme catalyses alpha-D-glucosamine 1-phosphate = D-glucosamine 6-phosphate. Functionally, catalyzes the conversion of glucosamine-6-phosphate to glucosamine-1-phosphate. This chain is Probable phosphoglucosamine mutase, found in Thermococcus gammatolerans (strain DSM 15229 / JCM 11827 / EJ3).